A 472-amino-acid chain; its full sequence is Aspartyl/glutamyl-tRNA(Asn/Gln) amidotransferase subunit B (472 aa).

Belongs to the GatB/GatE family. GatB subfamily. As to quaternary structure, heterotrimer of A, B and C subunits.

It carries out the reaction L-glutamyl-tRNA(Gln) + L-glutamine + ATP + H2O = L-glutaminyl-tRNA(Gln) + L-glutamate + ADP + phosphate + H(+). The catalysed reaction is L-aspartyl-tRNA(Asn) + L-glutamine + ATP + H2O = L-asparaginyl-tRNA(Asn) + L-glutamate + ADP + phosphate + 2 H(+). Its function is as follows. Allows the formation of correctly charged Asn-tRNA(Asn) or Gln-tRNA(Gln) through the transamidation of misacylated Asp-tRNA(Asn) or Glu-tRNA(Gln) in organisms which lack either or both of asparaginyl-tRNA or glutaminyl-tRNA synthetases. The reaction takes place in the presence of glutamine and ATP through an activated phospho-Asp-tRNA(Asn) or phospho-Glu-tRNA(Gln). The sequence is that of Aspartyl/glutamyl-tRNA(Asn/Gln) amidotransferase subunit B from Campylobacter jejuni subsp. jejuni serotype O:23/36 (strain 81-176).